The sequence spans 317 residues: Ferrochelatase (317 aa).

Fe cation is bound by residues His192 and Glu271.

It belongs to the ferrochelatase family.

The protein localises to the cytoplasm. It carries out the reaction heme b + 2 H(+) = protoporphyrin IX + Fe(2+). Its pathway is porphyrin-containing compound metabolism; protoheme biosynthesis; protoheme from protoporphyrin-IX: step 1/1. Catalyzes the ferrous insertion into protoporphyrin IX. The chain is Ferrochelatase from Citrifermentans bemidjiense (strain ATCC BAA-1014 / DSM 16622 / JCM 12645 / Bem) (Geobacter bemidjiensis).